The sequence spans 413 residues: uncharacterized protein (413 aa).

Transmembrane regions (helical) follow at residues 10-32 (GLTI…GRLP), 162-184 (VFLH…LVFL), 189-211 (LLPR…AFLV), 232-254 (LSFR…LFFF), 259-276 (YSYS…ILLV), 288-310 (ALMV…SFVT), and 325-347 (FAYA…SLIL).

Its subcellular location is the cell membrane. This is an uncharacterized protein from Aquifex aeolicus (strain VF5).